Here is a 95-residue protein sequence, read N- to C-terminus: Large ribosomal subunit protein bL27 (95 aa).

Residues 1 to 21 (MAHKKGASSSRNGRDSNAQRL) are disordered. Polar residues predominate over residues 7 to 19 (ASSSRNGRDSNAQ).

Belongs to the bacterial ribosomal protein bL27 family.

The sequence is that of Large ribosomal subunit protein bL27 from Parafrankia sp. (strain EAN1pec).